The primary structure comprises 345 residues: Transcription factor 19 (345 aa).

Positions Y31–L88 constitute an FHA domain. The residue at position 78 (S78) is a Phosphoserine. The interval L190 to V227 is disordered. The PHD-type zinc-finger motif lies at A293–G342. Zn(2+) is bound by residues C296, C298, C310, C313, H318, C321, C336, and C339.

The protein resides in the nucleus. Potential transcription factor that may play a role in the regulation of genes involved in cell cycle G1/S transition. May bind to regulatory elements of genes, including the promoter of the transcription factor FOXO1. The protein is Transcription factor 19 (TCF19) of Homo sapiens (Human).